Consider the following 450-residue polypeptide: Tubulin alpha chain (450 aa).

Residues glutamine 11, glutamate 71, serine 140, glycine 144, threonine 145, threonine 179, asparagine 206, and asparagine 228 each coordinate GTP. A Mg(2+)-binding site is contributed by glutamate 71. Glutamate 254 is a catalytic residue.

It belongs to the tubulin family. In terms of assembly, dimer of alpha and beta chains. A typical microtubule is a hollow water-filled tube with an outer diameter of 25 nm and an inner diameter of 15 nM. Alpha-beta heterodimers associate head-to-tail to form protofilaments running lengthwise along the microtubule wall with the beta-tubulin subunit facing the microtubule plus end conferring a structural polarity. Microtubules usually have 13 protofilaments but different protofilament numbers can be found in some organisms and specialized cells. Mg(2+) is required as a cofactor.

The protein localises to the cytoplasm. It is found in the cytoskeleton. The enzyme catalyses GTP + H2O = GDP + phosphate + H(+). Functionally, tubulin is the major constituent of microtubules, a cylinder consisting of laterally associated linear protofilaments composed of alpha- and beta-tubulin heterodimers. Microtubules grow by the addition of GTP-tubulin dimers to the microtubule end, where a stabilizing cap forms. Below the cap, tubulin dimers are in GDP-bound state, owing to GTPase activity of alpha-tubulin. The protein is Tubulin alpha chain of Zymoseptoria tritici (Speckled leaf blotch fungus).